A 196-amino-acid polypeptide reads, in one-letter code: Nodulation protein A (196 aa).

The protein belongs to the NodA family.

The protein resides in the cytoplasm. Functionally, N-acyltransferase required for nodulation. Acts in the production of a small, heat-stable compound (Nod) that stimulates mitosis in various plant protoplasts. This chain is Nodulation protein A, found in Sinorhizobium terangae.